Here is a 210-residue protein sequence, read N- to C-terminus: Glutathione S-transferase P 1 (210 aa).

The region spanning 2–81 is the GST N-terminal domain; it reads PPYTIVYFPV…HLGRSLGLYG (80 aa). The residue at position 4 (Tyr-4) is a Phosphotyrosine; by EGFR. Glutathione contacts are provided by residues Tyr-8, Arg-14, Trp-39, Lys-45, and 52-53; that span reads QL. At Thr-62 the chain carries Phosphothreonine. Residue 65-66 participates in glutathione binding; that stretch reads QS. The GST C-terminal domain occupies 83–204; it reads NQREAAQMDM…SSPEHVNRPI (122 aa). Residues Lys-103 and Lys-116 each carry the N6-succinyllysine modification. N6-acetyllysine is present on Lys-128.

As to quaternary structure, homodimer. Interacts with CDK5. Ubiquitously expressed.

It localises to the cytoplasm. The protein localises to the mitochondrion. The protein resides in the nucleus. It catalyses the reaction RX + glutathione = an S-substituted glutathione + a halide anion + H(+). The catalysed reaction is prostaglandin J2 + glutathione = prostaglandin J2-S-(R)-glutathione. It carries out the reaction prostaglandin J2 + glutathione = prostaglandin J2-S-(S)-glutathione. The enzyme catalyses prostaglandin A2 + glutathione = prostaglandin A2-S-(S)-glutathione. It catalyses the reaction 11(S)-hydroxy-14(S),15(S)-epoxy-(5Z,8Z,12E)-eicosatrienoate + glutathione = (11S,15S)-dihydroxy-14(R)-S-glutathionyl-(5Z,8Z,12E)-eicosatrienoate. Conjugation of reduced glutathione to a wide number of exogenous and endogenous hydrophobic electrophiles. Involved in the formation of glutathione conjugates of both prostaglandin A2 (PGA2) and prostaglandin J2 (PGJ2). Participates in the formation of novel hepoxilin regioisomers. Negatively regulates CDK5 activity via p25/p35 translocation to prevent neurodegeneration. The sequence is that of Glutathione S-transferase P 1 from Mus musculus (Mouse).